We begin with the raw amino-acid sequence, 1040 residues long: Multidrug resistance protein MdtB (1040 aa).

12 helical membrane passes run F16–I36, L347–A367, I369–L389, L396–I416, I440–F460, F472–P492, W537–I557, L863–I883, F888–A908, I911–V931, I968–V988, and I998–I1018.

It belongs to the resistance-nodulation-cell division (RND) (TC 2.A.6) family. MdtB subfamily. In terms of assembly, part of a tripartite efflux system composed of MdtA, MdtB and MdtC. MdtB forms a heteromultimer with MdtC.

It is found in the cell inner membrane. The chain is Multidrug resistance protein MdtB from Shigella boydii serotype 18 (strain CDC 3083-94 / BS512).